A 174-amino-acid polypeptide reads, in one-letter code: MKPIFIVALLFSTCLVNAKPSINDADIKREPEPNVAVPPCGDCYQQVGNTCVRVPSLCPARKREPEPNVAVPPCGDCYQQVGNTCVRVPSLCPARKREPEPNVAVPPCGDCYQQVGNTCVRVPSLCPARKREPEPNVAVPPCGDCYQQVGNTCVRVPSLCPARKREPENQDLWS.

An N-terminal signal peptide occupies residues 1–18 (MKPIFIVALLFSTCLVNA). The propeptide occupies 19 to 33 (KPSINDADIKREPEP). Pro39 carries the post-translational modification Hydroxyproline. Intrachain disulfides connect Cys40–Cys51 and Cys43–Cys58. A propeptide spanning residues 61–67 (RKREPEP) is cleaved from the precursor. Hydroxyproline is present on Pro73. Intrachain disulfides connect Cys74/Cys85 and Cys77/Cys92. Positions 95-101 (RKREPEP) are excised as a propeptide. At Pro107 the chain carries Hydroxyproline. 2 cysteine pairs are disulfide-bonded: Cys108–Cys119 and Cys111–Cys126. Positions 129 to 135 (RKREPEP) are excised as a propeptide. Pro141 is subject to Hydroxyproline. 2 disulfide bridges follow: Cys142/Cys153 and Cys145/Cys160. The propeptide occupies 163–174 (RKREPENQDLWS).

Belongs to the sea anemone BBH family.

Its subcellular location is the secreted. The protein localises to the nematocyst. In terms of biological role, neurotoxin that paralyzes freshwater crabs at high concentration. The polypeptide is U-stichotoxin-Hau2a (Heteractis aurora (Banded sea anemone)).